The sequence spans 424 residues: UDP-N-acetylglucosamine 1-carboxyvinyltransferase (424 aa).

22–23 lines the phosphoenolpyruvate pocket; that stretch reads KN. Arg98 contacts UDP-N-acetyl-alpha-D-glucosamine. The Proton donor role is filled by Cys122. A 2-(S-cysteinyl)pyruvic acid O-phosphothioketal modification is found at Cys122. Residues 127–131, Asp312, and Ile334 contribute to the UDP-N-acetyl-alpha-D-glucosamine site; that span reads RPVDQ.

It belongs to the EPSP synthase family. MurA subfamily.

The protein localises to the cytoplasm. It catalyses the reaction phosphoenolpyruvate + UDP-N-acetyl-alpha-D-glucosamine = UDP-N-acetyl-3-O-(1-carboxyvinyl)-alpha-D-glucosamine + phosphate. It functions in the pathway cell wall biogenesis; peptidoglycan biosynthesis. In terms of biological role, cell wall formation. Adds enolpyruvyl to UDP-N-acetylglucosamine. The protein is UDP-N-acetylglucosamine 1-carboxyvinyltransferase of Xanthomonas axonopodis pv. citri (strain 306).